A 332-amino-acid chain; its full sequence is Solute carrier family 25 member 16 (332 aa).

3 Solcar repeats span residues Phe34–Phe120, Ser128–Val216, and Leu238–Phe328. Helical transmembrane passes span Leu37–Leu57, Gly88–Ala108, Leu134–Val154, Gly191–Gly211, Leu244–Thr264, and Gly299–Phe319.

Belongs to the mitochondrial carrier (TC 2.A.29) family.

The protein resides in the mitochondrion inner membrane. In terms of biological role, may be involved in the transport of coenzyme A in the mitochondrial matrix. Very little is known about the physiological function of this carrier. This Mus musculus (Mouse) protein is Solute carrier family 25 member 16.